An 874-amino-acid polypeptide reads, in one-letter code: Ribosome biogenesis protein ERB1 (874 aa).

The segment at 1-148 (MAKKEVSASK…DAFAAADAAT (148 aa)) is disordered. The span at 27 to 41 (QAVEKEEAEKEKEEG) shows a compositional bias: basic and acidic residues. Over residues 55-77 (PESDSDDEGAAAAEEEEEEEEQQ) the composition is skewed to acidic residues. Basic and acidic residues predominate over residues 78-89 (QDVKELDLDKGE). Acidic residues-rich tracts occupy residues 95-104 (SDAEDFDSEE) and 128-139 (PKEDGDEQDEQD). The segment at 312-429 (RFVPSKHEAK…LRLVPGYQDS (118 aa)) is required for interaction with NOP7. Positions 429–465 (SVRERFERSLDLYLAPRLRKNKLNIDPESLIPELPSP) are required for interaction with YTM1. 2 WD repeats span residues 481–520 (GHTG…QVFK) and 529–569 (NGED…FEIE). Basic and acidic residues predominate over residues 593-602 (KVKGEDTKGD). Residues 593-640 (KVKGEDTKGDLDDDEEEEEEEEDDDDDEGQGKVKAHNSTAPAKKDVAK) form a disordered region. The span at 603 to 620 (LDDDEEEEEEEEDDDDDE) shows a compositional bias: acidic residues. 5 WD repeats span residues 658-700 (QCRR…SQSP), 703-741 (KSKG…LLKK), 744-783 (PGVR…TPYK), 787-827 (YHEK…DLMT), and 843-874 (INQI…LWTT).

The protein belongs to the WD repeat BOP1/ERB1 family. As to quaternary structure, component of the NOP7 complex, composed of ERB1, NOP7 and YTM1. The complex is held together by ERB1, which interacts with NOP7 via its N-terminal domain and with YTM1 via a high-affinity interaction between the seven-bladed beta-propeller domains of the 2 proteins. The NOP7 complex associates with the 66S pre-ribosome.

The protein resides in the nucleus. Its subcellular location is the nucleolus. It localises to the nucleoplasm. Functionally, component of the NOP7 complex, which is required for maturation of the 25S and 5.8S ribosomal RNAs and formation of the 60S ribosome. The protein is Ribosome biogenesis protein ERB1 of Lodderomyces elongisporus (strain ATCC 11503 / CBS 2605 / JCM 1781 / NBRC 1676 / NRRL YB-4239) (Yeast).